Here is a 113-residue protein sequence, read N- to C-terminus: Pro-corazonin (113 aa).

The N-terminal stretch at 1 to 19 (MATNITMFLIVITLTSVAA) is a signal peptide. The residue at position 20 (glutamine 20) is a Pyrrolidone carboxylic acid. Asparagine 30 is subject to Asparagine amide. The interval 74–96 (LGPCDTSKTRSTTNPSDTNTSAV) is disordered. A compositionally biased stretch (polar residues) spans 82–96 (TRSTTNPSDTNTSAV).

This sequence belongs to the corazonin family. Four pairs of lateral neurosecretory cells in the brains of late instar larvae, pupae and adults.

It localises to the secreted. In terms of biological role, cardioactive peptide. Corazonin is probably involved in the physiological regulation of the heart beat. This is Pro-corazonin from Galleria mellonella (Greater wax moth).